The following is a 501-amino-acid chain: MTRLNILMAASECVPFAKEGGLADVVGVLPKYLAHMGHDVRVVMPLYSRIDPERFGLERLPGVLVVPMGIMGNQYCGVWEGRLPGSAVPVYFLEHEGYYGREGLYEEDNVGYMDNDNRFIFLSRAAMELPKLIGFAPDVFHAHDWHTAAVPVFLNTLYRDDPLVGGAASVLTVHNMQHQGNFYPGAMEVLGIGWEHFTFLGLEKDNQTNLLKGGLYHATVLNTVSEGYAREMQTPEYGWGLDGVVRARSADLVGILNGVDYEEWNPETDPHIVANYSRSDLSGKKLCKRDVQRFFGLPERDDVPLFGLVGRLVKQKGIDILAEAIHRILALDVQVVMLGAGEPWSHFYFGDVRNEYPEKFGLYIGYNNGLSHRIEAGSDFFVMPSAFEPCGLNQMYSLRYGTLPIVRATGGLDDSVENFDEQNLTGNGFKFWSHDADALFDTVGWTVHTWYRRKDAMAALIGNAMAKRFTWEDSAARYEELYCRALRKRLGVGVFVRRFGG.

Residue Lys-18 coordinates ADP-alpha-D-glucose.

The protein belongs to the glycosyltransferase 1 family. Bacterial/plant glycogen synthase subfamily.

The enzyme catalyses [(1-&gt;4)-alpha-D-glucosyl](n) + ADP-alpha-D-glucose = [(1-&gt;4)-alpha-D-glucosyl](n+1) + ADP + H(+). It participates in glycan biosynthesis; glycogen biosynthesis. In terms of biological role, synthesizes alpha-1,4-glucan chains using ADP-glucose. The polypeptide is Glycogen synthase 1 (Geobacter sulfurreducens (strain ATCC 51573 / DSM 12127 / PCA)).